Here is a 127-residue protein sequence, read N- to C-terminus: Large ribosomal subunit protein bL12 (127 aa).

It belongs to the bacterial ribosomal protein bL12 family. In terms of assembly, homodimer. Part of the ribosomal stalk of the 50S ribosomal subunit. Forms a multimeric L10(L12)X complex, where L10 forms an elongated spine to which 2 to 4 L12 dimers bind in a sequential fashion. Binds GTP-bound translation factors.

Functionally, forms part of the ribosomal stalk which helps the ribosome interact with GTP-bound translation factors. Is thus essential for accurate translation. This is Large ribosomal subunit protein bL12 from Carboxydothermus hydrogenoformans (strain ATCC BAA-161 / DSM 6008 / Z-2901).